A 222-amino-acid chain; its full sequence is 7-cyano-7-deazaguanine synthase (222 aa).

Position 14-24 (14-24 (FSGGQDSTTCL)) interacts with ATP. Positions 190, 199, 202, and 205 each coordinate Zn(2+).

This sequence belongs to the QueC family. Homodimer. Zn(2+) is required as a cofactor.

It carries out the reaction 7-carboxy-7-deazaguanine + NH4(+) + ATP = 7-cyano-7-deazaguanine + ADP + phosphate + H2O + H(+). It participates in purine metabolism; 7-cyano-7-deazaguanine biosynthesis. In terms of biological role, catalyzes the ATP-dependent conversion of 7-carboxy-7-deazaguanine (CDG) to 7-cyano-7-deazaguanine (preQ(0)). The sequence is that of 7-cyano-7-deazaguanine synthase from Staphylococcus aureus (strain Mu3 / ATCC 700698).